A 280-amino-acid chain; its full sequence is Hydrolase MT0498 (280 aa).

In terms of domain architecture, CN hydrolase spans 1-251 (MRIALAQIRS…PQLLVADIDV (251 aa)). The active-site Proton acceptor is the glutamate 40. Lysine 110 (proton donor) is an active-site residue. Catalysis depends on cysteine 146, which acts as the Nucleophile.

The protein belongs to the carbon-nitrogen hydrolase superfamily. NIT1/NIT2 family.

This is Hydrolase MT0498 from Mycobacterium tuberculosis (strain CDC 1551 / Oshkosh).